The following is a 308-amino-acid chain: UPF0282 protein M1425_2116 (308 aa).

It belongs to the UPF0282 family.

This chain is UPF0282 protein M1425_2116, found in Saccharolobus islandicus (strain M.14.25 / Kamchatka #1) (Sulfolobus islandicus).